The primary structure comprises 217 residues: Adenylate kinase (217 aa).

ATP is bound at residue 10 to 15 (GAGKGT). Residues 30 to 59 (STGDMFRAAMKNETELGLKAKSFIDAGDLV) are NMP. AMP is bound by residues T31, R36, 57-59 (DLV), 85-88 (GFPR), and Q92. The tract at residues 126–163 (GRRVSPTTGKTYHIVYNPPKVEGKCDIDGSDLIQRDDD) is LID. Residues R127 and 136-137 (TY) contribute to the ATP site. AMP-binding residues include R160 and R171. Residue Q199 participates in ATP binding.

This sequence belongs to the adenylate kinase family. Monomer.

The protein resides in the cytoplasm. The catalysed reaction is AMP + ATP = 2 ADP. The protein operates within purine metabolism; AMP biosynthesis via salvage pathway; AMP from ADP: step 1/1. Catalyzes the reversible transfer of the terminal phosphate group between ATP and AMP. Plays an important role in cellular energy homeostasis and in adenine nucleotide metabolism. The polypeptide is Adenylate kinase (Shouchella clausii (strain KSM-K16) (Alkalihalobacillus clausii)).